Here is a 555-residue protein sequence, read N- to C-terminus: Glycerol dehydratase large subunit (555 aa).

Belongs to the diol/glycerol dehydratase large subunit family. Probably consists of three subunits: large, medium, and small. It depends on adenosylcob(III)alamin as a cofactor.

The enzyme catalyses glycerol = 3-hydroxypropanal + H2O. The polypeptide is Glycerol dehydratase large subunit (dhaB) (Citrobacter freundii).